A 230-amino-acid polypeptide reads, in one-letter code: Cytidylate kinase (230 aa).

Position 10–18 (Gly10–Thr18) interacts with ATP.

This sequence belongs to the cytidylate kinase family. Type 1 subfamily.

It localises to the cytoplasm. It carries out the reaction CMP + ATP = CDP + ADP. The enzyme catalyses dCMP + ATP = dCDP + ADP. This Flavobacterium johnsoniae (strain ATCC 17061 / DSM 2064 / JCM 8514 / BCRC 14874 / CCUG 350202 / NBRC 14942 / NCIMB 11054 / UW101) (Cytophaga johnsonae) protein is Cytidylate kinase.